The chain runs to 284 residues: Shikimate dehydrogenase (NADP(+)) (284 aa).

Shikimate-binding positions include 20-22 (SIS) and Ser-67. Catalysis depends on Lys-71, which acts as the Proton acceptor. NADP(+) is bound at residue Asp-83. Positions 92 and 107 each coordinate shikimate. Residues 129-133 (GAGGA) and Ile-227 each bind NADP(+). Shikimate is bound at residue Tyr-229. Gly-250 is a binding site for NADP(+).

Belongs to the shikimate dehydrogenase family. As to quaternary structure, homodimer.

The catalysed reaction is shikimate + NADP(+) = 3-dehydroshikimate + NADPH + H(+). The protein operates within metabolic intermediate biosynthesis; chorismate biosynthesis; chorismate from D-erythrose 4-phosphate and phosphoenolpyruvate: step 4/7. In terms of biological role, involved in the biosynthesis of the chorismate, which leads to the biosynthesis of aromatic amino acids. Catalyzes the reversible NADPH linked reduction of 3-dehydroshikimate (DHSA) to yield shikimate (SA). The sequence is that of Shikimate dehydrogenase (NADP(+)) from Streptococcus pneumoniae (strain P1031).